A 244-amino-acid polypeptide reads, in one-letter code: Orotidine 5'-phosphate decarboxylase (244 aa).

Substrate is bound by residues aspartate 20, lysine 42, 70-79 (DLKFFDIPAT), threonine 125, arginine 186, glutamine 195, glycine 215, and arginine 216. Lysine 72 serves as the catalytic Proton donor.

The protein belongs to the OMP decarboxylase family. Type 1 subfamily. As to quaternary structure, homodimer.

It carries out the reaction orotidine 5'-phosphate + H(+) = UMP + CO2. The protein operates within pyrimidine metabolism; UMP biosynthesis via de novo pathway; UMP from orotate: step 2/2. Functionally, catalyzes the decarboxylation of orotidine 5'-monophosphate (OMP) to uridine 5'-monophosphate (UMP). The polypeptide is Orotidine 5'-phosphate decarboxylase (Xylella fastidiosa (strain M12)).